A 297-amino-acid chain; its full sequence is 4-diphosphocytidyl-2-C-methyl-D-erythritol kinase (297 aa).

K6 is a catalytic residue. Residue 94-104 participates in ATP binding; sequence PVAGGMAGGSA. Residue D136 is part of the active site.

It belongs to the GHMP kinase family. IspE subfamily.

The catalysed reaction is 4-CDP-2-C-methyl-D-erythritol + ATP = 4-CDP-2-C-methyl-D-erythritol 2-phosphate + ADP + H(+). It functions in the pathway isoprenoid biosynthesis; isopentenyl diphosphate biosynthesis via DXP pathway; isopentenyl diphosphate from 1-deoxy-D-xylulose 5-phosphate: step 3/6. Its function is as follows. Catalyzes the phosphorylation of the position 2 hydroxy group of 4-diphosphocytidyl-2C-methyl-D-erythritol. This chain is 4-diphosphocytidyl-2-C-methyl-D-erythritol kinase, found in Nocardioides sp. (strain ATCC BAA-499 / JS614).